Here is a 196-residue protein sequence, read N- to C-terminus: MILKNAIALTGGIGTGKSTTLKILESQGYKILDADKIAHQLLQEHRLEIAQRFGSDILEKDILNRKKLGAIVFQNANELKWLEDFLHPLIRECMLKKACELEKNHQAYFLDIPLFFEVGGKKRYPVSRVVLIYAPRALQIERLLERDKLKEAEILQRLACQMDIEQKRAMSDYIIDNSSSLKDLNKQVERFLKTLL.

The DPCK domain occupies 6–196 (AIALTGGIGT…QVERFLKTLL (191 aa)). Residue 14–19 (GTGKST) participates in ATP binding.

It belongs to the CoaE family.

It is found in the cytoplasm. The enzyme catalyses 3'-dephospho-CoA + ATP = ADP + CoA + H(+). Its pathway is cofactor biosynthesis; coenzyme A biosynthesis; CoA from (R)-pantothenate: step 5/5. In terms of biological role, catalyzes the phosphorylation of the 3'-hydroxyl group of dephosphocoenzyme A to form coenzyme A. The chain is Dephospho-CoA kinase from Helicobacter pylori (strain J99 / ATCC 700824) (Campylobacter pylori J99).